The sequence spans 96 residues: UPF0235 protein Shewmr4_1190 (96 aa).

Belongs to the UPF0235 family.

The polypeptide is UPF0235 protein Shewmr4_1190 (Shewanella sp. (strain MR-4)).